A 137-amino-acid polypeptide reads, in one-letter code: MAFDFGERRIGVAVGDTILGIPHPLATIDTAVTDERFAAIARLIEEWQPRQLVVGLPMHPDGEEHELSALSRRFANRLKGRFGLPVWLVDERYTSVIAEQLLEEAGVKKGRKQKPALDQVAAQAILAGWFEQPGTAV.

The protein belongs to the YqgF nuclease family.

It is found in the cytoplasm. Its function is as follows. Could be a nuclease involved in processing of the 5'-end of pre-16S rRNA. This is Putative pre-16S rRNA nuclease from Chromobacterium violaceum (strain ATCC 12472 / DSM 30191 / JCM 1249 / CCUG 213 / NBRC 12614 / NCIMB 9131 / NCTC 9757 / MK).